Consider the following 326-residue polypeptide: Polyprenal reductase (326 aa).

A run of 5 helical transmembrane segments spans residues 26 to 46, 84 to 104, 167 to 187, 212 to 232, and 256 to 276; these read MMFG…TFVE, HFYT…VSTV, INLS…IALL, ILYL…NMIL, and LFNL…FCIA.

This sequence belongs to the steroid 5-alpha reductase family. Polyprenal reductase subfamily.

It is found in the endoplasmic reticulum membrane. The catalysed reaction is a di-trans,poly-cis-dolichal + NADP(+) = a di-trans,poly-cis-polyprenal + NADPH + H(+). The protein operates within protein modification; protein glycosylation. Functionally, plays a key role in early steps of protein N-linked glycosylation by being involved in the conversion of polyprenol into dolichol. Acts as a polyprenal reductase that mediates the reduction of polyprenal into dolichal in a NADP-dependent mechanism. Dolichols are required for the synthesis of dolichol-linked monosaccharides and the oligosaccharide precursor used for N-glycosylation. In Drosophila melanogaster (Fruit fly), this protein is Polyprenal reductase.